The following is a 319-amino-acid chain: Acetyl esterase (319 aa).

The Involved in the stabilization of the negatively charged intermediate by the formation of the oxyanion hole motif lies at 91 to 93 (HGG). Residues Ser-165, Asp-262, and His-292 contribute to the active site.

The protein belongs to the 'GDXG' lipolytic enzyme family. As to quaternary structure, homodimer. Interacts with MalT and MelA.

Its subcellular location is the cytoplasm. Displays esterase activity towards short chain fatty esters (acyl chain length of up to 8 carbons). Able to hydrolyze triacetylglycerol (triacetin) and tributyrylglycerol (tributyrin), but not trioleylglycerol (triolein) or cholesterol oleate. Negatively regulates MalT activity by antagonizing maltotriose binding. Inhibits MelA galactosidase activity. This Escherichia coli O8 (strain IAI1) protein is Acetyl esterase.